A 644-amino-acid polypeptide reads, in one-letter code: Transcription factor cep-1 (644 aa).

The DNA-binding element occupies 223 to 418 (EKWMEIDVLK…NFCEREDAKQ (196 aa)). Cysteine 307, histidine 310, cysteine 361, and cysteine 365 together coordinate Zn(2+). Residues 528 to 555 (TNYSFRTLTLSTAEYTKVVEFLAREAKV) are required for tertiary structure stability of the protein.

It belongs to the p53 family. Homodimer. Interacts (via C-terminus domain) with prmt-5; not methylated by prmt-5. Interacts with cbp-1 (via HAT domain); cep-1 transcriptional activity may be inhibited by interaction with methylated cbp-1. Component of a complex that contains prmt-5 and cbp-1. Interacts with ape-1; the interaction inhibits pro-apoptotic activity of cep-1. Zn(2+) serves as cofactor. Post-translationally, phosphorylated in response to IR-induced DNA damage which is thought to be mediated by akt-1. In terms of tissue distribution, expressed in pharyngeal muscle and neurons.

Its subcellular location is the nucleus. In terms of biological role, transcriptional activator that binds the same DNA consensus sequence as p53. Has a role in normal development to ensure proper meiotic chromosome segregation. Promotes apoptosis under conditions of cellular and genotoxic stress in response to DNA damage, hypoxia, or starvation. Regulates germline apoptosis in response to DNA damage. Its pro-apoptotic activity is inhibited when bound to ape-1 in vitro. Plays a role in cell cycle arrest in the germline in response to DNA damage by UV-C light. However, not required for survival in response to DNA damage induced by UV-C light, indicating that it is unlikely to be involved in DNA repair. Required for induction of ced-13 in response to DNA damage. Regulates DNA damage-induced apoptosis by inducing transcription of the programmed cell death activator egl-1. Regulates germline proliferation by activating phg-1. Modulates lifespan. This is Transcription factor cep-1 from Caenorhabditis elegans.